We begin with the raw amino-acid sequence, 430 residues long: ATP-dependent protease ATPase subunit HslU (430 aa).

Residues Val18, 60–65, Asp243, Glu308, and Arg380 contribute to the ATP site; that span reads GVGKTE.

The protein belongs to the ClpX chaperone family. HslU subfamily. A double ring-shaped homohexamer of HslV is capped on each side by a ring-shaped HslU homohexamer. The assembly of the HslU/HslV complex is dependent on binding of ATP.

The protein localises to the cytoplasm. Its function is as follows. ATPase subunit of a proteasome-like degradation complex; this subunit has chaperone activity. The binding of ATP and its subsequent hydrolysis by HslU are essential for unfolding of protein substrates subsequently hydrolyzed by HslV. HslU recognizes the N-terminal part of its protein substrates and unfolds these before they are guided to HslV for hydrolysis. This is ATP-dependent protease ATPase subunit HslU from Caulobacter vibrioides (strain ATCC 19089 / CIP 103742 / CB 15) (Caulobacter crescentus).